The chain runs to 116 residues: Tyrosine-protein phosphatase 14 (116 aa).

A Tyrosine-protein phosphatase domain is found at 1–116; that stretch reads WRMITQEKAQ…SLKNPGPVIV (116 aa). D84 contacts substrate.

The protein belongs to the protein-tyrosine phosphatase family.

It carries out the reaction O-phospho-L-tyrosyl-[protein] + H2O = L-tyrosyl-[protein] + phosphate. This chain is Tyrosine-protein phosphatase 14 (STY-14), found in Styela plicata (Wrinkled sea squirt).